The following is a 124-amino-acid chain: Fluoride-specific ion channel FluC 2 (124 aa).

4 helical membrane passes run 9-29, 34-54, 67-87, and 99-119; these read LGIF…STWL, DFPW…IYLV, LILA…SLML, and LSLI…AYYL. Positions 77 and 80 each coordinate Na(+).

This sequence belongs to the fluoride channel Fluc/FEX (TC 1.A.43) family.

It is found in the cell membrane. It carries out the reaction fluoride(in) = fluoride(out). With respect to regulation, na(+) is not transported, but it plays an essential structural role and its presence is essential for fluoride channel function. Functionally, fluoride-specific ion channel. Important for reducing fluoride concentration in the cell, thus reducing its toxicity. The chain is Fluoride-specific ion channel FluC 2 from Streptococcus pneumoniae serotype 4 (strain ATCC BAA-334 / TIGR4).